A 502-amino-acid polypeptide reads, in one-letter code: Glycerol kinase (502 aa).

Residue T14 coordinates ADP. ATP contacts are provided by T14, T15, and S16. T14 provides a ligand contact to sn-glycerol 3-phosphate. ADP is bound at residue R18. Sn-glycerol 3-phosphate is bound by residues R84, E85, Y136, and D246. Glycerol-binding residues include R84, E85, Y136, D246, and Q247. Positions 268 and 311 each coordinate ADP. ATP contacts are provided by T268, G311, Q315, and G412. ADP contacts are provided by G412 and N416.

It belongs to the FGGY kinase family. In terms of assembly, homotetramer and homodimer (in equilibrium). Heterodimer with EIIA-Glc. Binds 1 zinc ion per glycerol kinase EIIA-Glc dimer. The zinc ion is important for dimerization.

It carries out the reaction glycerol + ATP = sn-glycerol 3-phosphate + ADP + H(+). It participates in polyol metabolism; glycerol degradation via glycerol kinase pathway; sn-glycerol 3-phosphate from glycerol: step 1/1. With respect to regulation, activity of this regulatory enzyme is affected by several metabolites. Allosterically and non-competitively inhibited by fructose 1,6-bisphosphate (FBP) and unphosphorylated phosphocarrier protein EIIA-Glc (III-Glc), an integral component of the bacterial phosphotransferase (PTS) system. In terms of biological role, key enzyme in the regulation of glycerol uptake and metabolism. Catalyzes the phosphorylation of glycerol to yield sn-glycerol 3-phosphate. The chain is Glycerol kinase from Citrobacter koseri (strain ATCC BAA-895 / CDC 4225-83 / SGSC4696).